Reading from the N-terminus, the 345-residue chain is Myb/SANT-like DNA-binding domain-containing protein 4 (345 aa).

Residues 4-77 (LKRKRKSNFS…EVKRRYLDWR (74 aa)) form the Myb-like domain. Residue Lys9 forms a Glycyl lysine isopeptide (Lys-Gly) (interchain with G-Cter in SUMO2) linkage. Residue Ser106 is modified to Phosphoserine. Residues Lys114 and Lys142 each participate in a glycyl lysine isopeptide (Lys-Gly) (interchain with G-Cter in SUMO2) cross-link. The segment at 139 to 175 (TEVKVEEEERDPQSPEFEIEEEEEMLSSVIPDSRREN) is disordered. At Thr188 the chain carries Phosphothreonine. Residues 202-344 (HLLMNIEKQK…RLRIQKEGHL (143 aa)) adopt a coiled-coil conformation. Residues Lys237, Lys254, and Lys273 each participate in a glycyl lysine isopeptide (Lys-Gly) (interchain with G-Cter in SUMO2) cross-link.

The chain is Myb/SANT-like DNA-binding domain-containing protein 4 (Msantd4) from Mus musculus (Mouse).